The following is a 498-amino-acid chain: ATP synthase subunit alpha, chloroplastic (498 aa).

170–177 contacts ATP; sequence GDRQTGKT.

The protein belongs to the ATPase alpha/beta chains family. F-type ATPases have 2 components, CF(1) - the catalytic core - and CF(0) - the membrane proton channel. CF(1) has five subunits: alpha(3), beta(3), gamma(1), delta(1), epsilon(1). CF(0) has four main subunits: a, b, b' and c.

The protein resides in the plastid. Its subcellular location is the chloroplast thylakoid membrane. The catalysed reaction is ATP + H2O + 4 H(+)(in) = ADP + phosphate + 5 H(+)(out). In terms of biological role, produces ATP from ADP in the presence of a proton gradient across the membrane. The alpha chain is a regulatory subunit. This is ATP synthase subunit alpha, chloroplastic from Oltmannsiellopsis viridis (Marine flagellate).